We begin with the raw amino-acid sequence, 936 residues long: Sine oculis-binding protein homolog A (936 aa).

Positions Met1–Lys14 are enriched in basic and acidic residues. Disordered stretches follow at residues Met1 to Gly46 and Ala108 to Leu151. The span at Ala108–Ser144 shows a compositional bias: polar residues. FCS-type zinc fingers lie at residues Glu169–Ala207 and Leu247–Asn287. 6 disordered regions span residues Leu311 to Glu330, Leu336 to Pro424, Ser486 to Ala511, Asn574 to Glu632, Pro697 to Ser727, and Asp842 to Ala877. Residues Gly349 to Ser382 are compositionally biased toward low complexity. Over residues Ser395 to Ile404 the composition is skewed to pro residues. Composition is skewed to polar residues over residues Pro617–Glu632, Asp708–Thr717, and Asn850–Thr859.

This sequence belongs to the SOBP family.

In terms of biological role, implicated in development of the cochlea. The chain is Sine oculis-binding protein homolog A (sobpa) from Danio rerio (Zebrafish).